A 120-amino-acid polypeptide reads, in one-letter code: UPF0231 protein ETA_08290 (120 aa).

The protein belongs to the UPF0231 family.

This chain is UPF0231 protein ETA_08290, found in Erwinia tasmaniensis (strain DSM 17950 / CFBP 7177 / CIP 109463 / NCPPB 4357 / Et1/99).